The chain runs to 305 residues: Ribosomal RNA small subunit methyltransferase H (305 aa).

Residues 37-39 (GGH), Asp57, Phe85, Asp101, and His108 contribute to the S-adenosyl-L-methionine site.

This sequence belongs to the methyltransferase superfamily. RsmH family.

Its subcellular location is the cytoplasm. The catalysed reaction is cytidine(1402) in 16S rRNA + S-adenosyl-L-methionine = N(4)-methylcytidine(1402) in 16S rRNA + S-adenosyl-L-homocysteine + H(+). Its function is as follows. Specifically methylates the N4 position of cytidine in position 1402 (C1402) of 16S rRNA. This Parabacteroides distasonis (strain ATCC 8503 / DSM 20701 / CIP 104284 / JCM 5825 / NCTC 11152) protein is Ribosomal RNA small subunit methyltransferase H.